The chain runs to 131 residues: Large ribosomal subunit protein bL12c (131 aa).

Positions 106-125 (KDNTNKENSEEIKQQLEEAG) are enriched in basic and acidic residues. Residues 106–131 (KDNTNKENSEEIKQQLEEAGAKVSIK) form a disordered region.

This sequence belongs to the bacterial ribosomal protein bL12 family. Homodimer. Part of the ribosomal stalk of the 50S ribosomal subunit. Forms a multimeric L10(L12)X complex, where L10 forms an elongated spine to which 2 to 4 L12 dimers bind in a sequential fashion. Binds GTP-bound translation factors.

The protein localises to the plastid. Its subcellular location is the chloroplast. Its function is as follows. Forms part of the ribosomal stalk which helps the ribosome interact with GTP-bound translation factors. Is thus essential for accurate translation. This Gracilaria tenuistipitata var. liui (Red alga) protein is Large ribosomal subunit protein bL12c.